We begin with the raw amino-acid sequence, 240 residues long: HTH-type transcriptional regulator Mce2R (240 aa).

The region spanning 9 to 77 is the HTH gntR-type domain; it reads RSVPEEVFEQ…QGDVTTVRDF (69 aa). Positions 37–56 form a DNA-binding region, H-T-H motif; the sequence is ERRLAELLGVSRPAVREALK.

Its function is as follows. Negatively regulates the expression of its operon as well as expression of end (endonuclease 4). This is HTH-type transcriptional regulator Mce2R (mce2R) from Mycobacterium tuberculosis (strain CDC 1551 / Oshkosh).